Consider the following 1270-residue polypeptide: DNA-directed RNA polymerase subunit beta (1270 aa).

The protein belongs to the RNA polymerase beta chain family. The RNAP catalytic core consists of 2 alpha, 1 beta, 1 beta' and 1 omega subunit. When a sigma factor is associated with the core the holoenzyme is formed, which can initiate transcription.

It carries out the reaction RNA(n) + a ribonucleoside 5'-triphosphate = RNA(n+1) + diphosphate. DNA-dependent RNA polymerase catalyzes the transcription of DNA into RNA using the four ribonucleoside triphosphates as substrates. This is DNA-directed RNA polymerase subunit beta from Flavobacterium psychrophilum (strain ATCC 49511 / DSM 21280 / CIP 103535 / JIP02/86).